A 278-amino-acid polypeptide reads, in one-letter code: Ribosomal RNA small subunit methyltransferase A (278 aa).

Residues asparagine 27, leucine 29, glycine 54, glutamate 75, aspartate 95, and asparagine 118 each coordinate S-adenosyl-L-methionine.

This sequence belongs to the class I-like SAM-binding methyltransferase superfamily. rRNA adenine N(6)-methyltransferase family. RsmA subfamily.

It localises to the cytoplasm. The catalysed reaction is adenosine(1518)/adenosine(1519) in 16S rRNA + 4 S-adenosyl-L-methionine = N(6)-dimethyladenosine(1518)/N(6)-dimethyladenosine(1519) in 16S rRNA + 4 S-adenosyl-L-homocysteine + 4 H(+). In terms of biological role, specifically dimethylates two adjacent adenosines (A1518 and A1519) in the loop of a conserved hairpin near the 3'-end of 16S rRNA in the 30S particle. May play a critical role in biogenesis of 30S subunits. In Chlamydia caviae (strain ATCC VR-813 / DSM 19441 / 03DC25 / GPIC) (Chlamydophila caviae), this protein is Ribosomal RNA small subunit methyltransferase A.